The chain runs to 217 residues: Ribonuclease HII (217 aa).

An RNase H type-2 domain is found at 34–217; it reads WPVAGTDEAG…RMSFRPLKRD (184 aa). 3 residues coordinate a divalent metal cation: Asp40, Glu41, and Asp131.

Belongs to the RNase HII family. Mn(2+) serves as cofactor. The cofactor is Mg(2+).

It localises to the cytoplasm. It catalyses the reaction Endonucleolytic cleavage to 5'-phosphomonoester.. Endonuclease that specifically degrades the RNA of RNA-DNA hybrids. The sequence is that of Ribonuclease HII from Agrobacterium fabrum (strain C58 / ATCC 33970) (Agrobacterium tumefaciens (strain C58)).